Consider the following 576-residue polypeptide: Arginine--tRNA ligase (576 aa).

A 'HIGH' region motif is present at residues 128-136 (PTGPMHIGH).

It belongs to the class-I aminoacyl-tRNA synthetase family. As to quaternary structure, monomer.

It localises to the cytoplasm. It carries out the reaction tRNA(Arg) + L-arginine + ATP = L-arginyl-tRNA(Arg) + AMP + diphosphate. This chain is Arginine--tRNA ligase, found in Rickettsia conorii (strain ATCC VR-613 / Malish 7).